The following is a 678-amino-acid chain: Glutamic acid-rich protein (678 aa).

The N-terminal stretch at 1–25 is a signal peptide; the sequence is MNVLFLSYNICILFFVVCTLNFSTK. A compositionally biased stretch (basic and acidic residues) spans 56–79; that stretch reads EKNKDDNSKSETLLKEEKDEKDDV. Disordered regions lie at residues 56 to 194, 225 to 445, and 520 to 678; these read EKNK…NLDE, ISSV…VVKN, and VVPR…NAKI. A compositionally biased stretch (polar residues) spans 80–107; that stretch reads PTTSNDNLKNAHNNNEISSSTDPTNIIN. Residues 109 to 120 show a composition bias toward basic and acidic residues; it reads NDKDNENSVDKK. A run of 15 repeats spans residues 120–122, 123–125, 126–128, 129–131, 132–134, 135–137, 138–140, 141–143, 144–146, 147–149, 150–152, 153–155, 156–158, 159–161, and 162–164. Positions 120–164 are 15 X 3 AA tandem repeats of K-K-[DEHK]; it reads KKDKKEKKHKKDKKEKKEKKDKKEKKDKKEKKHKKEKKHKKDKKK. Over residues 121–165 the composition is skewed to basic residues; that stretch reads KDKKEKKHKKDKKEKKEKKDKKEKKDKKEKKHKKEKKHKKDKKKK. Basic and acidic residues-rich tracts occupy residues 231–329 and 371–411; these read TSND…EEKE and PEEH…EHKS. 14 consecutive repeat copies span residues 372 to 376, 377 to 381, 382 to 386, 387 to 391, 392 to 396, 397 to 401, 402 to 406, 407 to 411, 412 to 416, 417 to 421, 422 to 426, 427 to 431, 432 to 436, and 437 to 441. Residues 372-416 are 9 X 5 AA tandem repeats of [EGK]-E-H-K-[EKS]; that stretch reads EEHKEGEHKEEEHKEGEHKEGEHKEEEHKEEEHKKEEHKSKEHKS. Residues 412–443 are compositionally biased toward basic residues; that stretch reads KEHKSKGKKDKGKKDKGKHKKAKKEKVKKHVV. The 5 X 5 AA tandem repeats of K-[GAV]-K-[KH]-[DKEH] stretch occupies residues 417–441; that stretch reads KGKKDKGKKDKGKHKKAKKEKVKKH. A compositionally biased stretch (basic and acidic residues) spans 532 to 565; the sequence is AKIEEAELQKQKHVDKEEDKKEESKEVQEESKEV. Acidic residues predominate over residues 566–663; that stretch reads QEDEEEVEED…EEEEEEEEEE (98 aa). Residues 667-678 are compositionally biased toward basic residues; sequence KIKRNLRKNAKI.

The polypeptide is Glutamic acid-rich protein (GARP) (Plasmodium falciparum (isolate FC27 / Papua New Guinea)).